The chain runs to 114 residues: Protein vCCL3 (114 aa).

An N-terminal signal peptide occupies residues 1-26; the sequence is MWSMCWVLRAHLGLLFWVAVIELCAA.

Its function is as follows. Acts as a highly selective agonist for human lymphoactin receptor XCR1. In Human herpesvirus 8 type P (isolate GK18) (HHV-8), this protein is Protein vCCL3 (K4.1).